We begin with the raw amino-acid sequence, 61 residues long: Weak toxin CM-2a (61 aa).

4 disulfides stabilise this stretch: C3/C19, C12/C37, C41/C49, and C50/C55.

It belongs to the three-finger toxin family. Short-chain subfamily. Orphan group XX sub-subfamily. Expressed by the venom gland.

It localises to the secreted. This is Weak toxin CM-2a from Naja annulifera (Banded Egyptian cobra).